A 439-amino-acid polypeptide reads, in one-letter code: Protein pop-1 (439 aa).

The segment at 1–38 (MMADEELGDEVKVFRRDEDADDDPMISGETSEQQLADD) is disordered. Basic and acidic residues predominate over residues 9-18 (DEVKVFRRDE). Residues 87 to 138 (SGLPIMFPMVVPQYLSPNPNINMMNMMTMRAAMAGAPLSPAFPAMFSPNPLF) form an involved in nuclear asymmetry region. Ser-125 carries the post-translational modification Phosphoserine; by LIT1. Positions 199–269 (IKKPLNAFMW…SHKEKYPQWS (71 aa)) form a DNA-binding region, HMG box. A compositionally biased stretch (basic and acidic residues) spans 254–265 (AKKDRESHKEKY). 3 disordered regions span residues 254 to 298 (AKKD…NNDQ), 329 to 365 (RSGS…MPMN), and 385 to 439 (SAHL…VCTL). The segment covering 277–286 (NKKKPKRKRD) has biased composition (basic residues). Composition is skewed to low complexity over residues 346 to 365 (GCSS…MPMN) and 385 to 400 (SAHL…SGTS). Positions 409-420 (SESDVDEDEDID) are enriched in acidic residues. Polar residues predominate over residues 422–439 (TITQQTQEYIMQESVCTL).

The protein belongs to the TCF/LEF family. In terms of assembly, interacts with hda-1. Interacts with bar-1. Interacts with par-5; the interaction is direct and is enhanced by lit-1-mediated pop-1 phosphorylation. The interaction also leads to the subsequent nuclear export of pop-1. Interacts (when phosphorylated on Ser-125) with lit-1; the interaction is dependent on the beta-catenin-lit-1 complex. Interacts with wrm-1. Post-translationally, phosphorylated on Ser-125 by lit-1 in the beta-catenin-lit-1 complex. Phosphorylation promotes the interaction of pop-1 and par-5 and the subsequent translocation of pop-1 from the nucleus to the cytoplasm.

The protein resides in the nucleus. It is found in the cytoplasm. Its function is as follows. Part of the Wnt signaling pathway essential for the specification of the mesodermal cell fate in early embryos. Required for asymmetrical division of somatic gonadal precursor descendants which initiate axis formation required to control organ shape. Similarly, involved in asymmetrical division of seam cells, a stem cell-like lineage. Represses expression of target genes via its interaction with hda-1 histone deacetylase. Required for specification of the M lineage-derived coelomocyte and sex myoblast fate. Regulates coelomocyte fate by positively regulating proliferation and ceh-34 and possibly eya-1 expression in M.dlpa and M.drpa precursors. The polypeptide is Protein pop-1 (Caenorhabditis briggsae).